The sequence spans 317 residues: Methionyl-tRNA formyltransferase (317 aa).

109–112 (SLLP) lines the (6S)-5,6,7,8-tetrahydrofolate pocket.

It belongs to the Fmt family.

It catalyses the reaction L-methionyl-tRNA(fMet) + (6R)-10-formyltetrahydrofolate = N-formyl-L-methionyl-tRNA(fMet) + (6S)-5,6,7,8-tetrahydrofolate + H(+). Its function is as follows. Attaches a formyl group to the free amino group of methionyl-tRNA(fMet). The formyl group appears to play a dual role in the initiator identity of N-formylmethionyl-tRNA by promoting its recognition by IF2 and preventing the misappropriation of this tRNA by the elongation apparatus. The chain is Methionyl-tRNA formyltransferase from Halalkalibacterium halodurans (strain ATCC BAA-125 / DSM 18197 / FERM 7344 / JCM 9153 / C-125) (Bacillus halodurans).